Consider the following 363-residue polypeptide: MRTTPIRVLVVDDSALMRKMITQMLQKDPAIEVIGTAMDGAFGLKKIEELRPDVVTLDLEMPNMDGMEMLRHITKRGQTPVIVVSAHTTQGARETFKALQLGAFDFVAKPQEGSSLTLENVADEIIAKIKVAGAARKPRPQIATVDEALLRSARKPARPPVASRTTPSKIIAIGISTGGPNALLFMLSQLPADFAGTILIVQHMPEGFTQMFSNRLAESCAIEVKEAASGDLLLAGRALICPGNRHMRVRRMPMGDVVVLSDEPPVNGHRPSADVLFRSVAQEFGPKVVALIMTGMGEDGADAIGAVKAAGGLAVAQDEGSSVVFGMPKVAIERGNVNRVVALDALPNLLMVQSAAQRVSSFD.

The region spanning 7 to 124 is the Response regulatory domain; that stretch reads RVLVVDDSAL…SLTLENVADE (118 aa). Aspartate 58 is subject to 4-aspartylphosphate. Residues 160–357 enclose the CheB-type methylesterase domain; sequence PVASRTTPSK…NLLMVQSAAQ (198 aa). Catalysis depends on residues serine 176, histidine 203, and aspartate 299.

The protein belongs to the CheB family. Phosphorylated by CheA. Phosphorylation of the N-terminal regulatory domain activates the methylesterase activity.

It is found in the cytoplasm. It carries out the reaction [protein]-L-glutamate 5-O-methyl ester + H2O = L-glutamyl-[protein] + methanol + H(+). It catalyses the reaction L-glutaminyl-[protein] + H2O = L-glutamyl-[protein] + NH4(+). Functionally, involved in chemotaxis. Part of a chemotaxis signal transduction system that modulates chemotaxis in response to various stimuli. Catalyzes the demethylation of specific methylglutamate residues introduced into the chemoreceptors (methyl-accepting chemotaxis proteins or MCP) by CheR. Also mediates the irreversible deamidation of specific glutamine residues to glutamic acid. In Koribacter versatilis (strain Ellin345), this protein is Protein-glutamate methylesterase/protein-glutamine glutaminase 2.